A 96-amino-acid polypeptide reads, in one-letter code: UPF0102 protein ML1607 (96 aa).

This sequence belongs to the UPF0102 family.

This chain is UPF0102 protein ML1607, found in Mycobacterium leprae (strain TN).